The primary structure comprises 231 residues: MTNKTRKETNEIKNNITLPPNIKTEVNRTSKYDFTNLSKDLEIVYALIKITGFDEYLPFNIENLNKIFIKEKISPYPYLLNLIKDLIILFVIGLIITIIGLLMYEPTRPKVISIIASILYKLKIKEKPKPKKKETIKLPKPPKIYISDVIYSLGDTVRIEISSEIDIGNNLYILSPTNKKYKIELIKTGKNKYLGLFKIPENEVPGQYFIIYKPENLSIGGFLVVDIKKEM.

Residues 86-106 (LIILFVIGLIITIIGLLMYEP) traverse the membrane as a helical segment.

It localises to the membrane. This is an uncharacterized protein from Methanocaldococcus jannaschii (strain ATCC 43067 / DSM 2661 / JAL-1 / JCM 10045 / NBRC 100440) (Methanococcus jannaschii).